The primary structure comprises 98 residues: Large ribosomal subunit protein uL23 (98 aa).

It belongs to the universal ribosomal protein uL23 family. As to quaternary structure, part of the 50S ribosomal subunit. Contacts protein L29, and trigger factor when it is bound to the ribosome.

Functionally, one of the early assembly proteins it binds 23S rRNA. One of the proteins that surrounds the polypeptide exit tunnel on the outside of the ribosome. Forms the main docking site for trigger factor binding to the ribosome. The chain is Large ribosomal subunit protein uL23 from Rickettsia africae (strain ESF-5).